The chain runs to 484 residues: D-aminoacylase (484 aa).

The protein belongs to the metallo-dependent hydrolases superfamily. N-acyl-D-amino-acid deacylase family. Requires Zn(2+) as cofactor.

The protein resides in the cytoplasm. The catalysed reaction is an N-acyl-D-amino acid + H2O = a D-alpha-amino acid + a carboxylate. Functionally, has a wide specificity; hydrolyzes N-acyl derivative of neutral D-amino acids. The protein is D-aminoacylase (dan) of Alcaligenes xylosoxydans xylosoxydans (Achromobacter xylosoxidans).